The primary structure comprises 432 residues: Trigger factor (432 aa).

Positions Glu161 to Pro246 constitute a PPIase FKBP-type domain.

This sequence belongs to the FKBP-type PPIase family. Tig subfamily.

The protein resides in the cytoplasm. The enzyme catalyses [protein]-peptidylproline (omega=180) = [protein]-peptidylproline (omega=0). In terms of biological role, involved in protein export. Acts as a chaperone by maintaining the newly synthesized protein in an open conformation. Functions as a peptidyl-prolyl cis-trans isomerase. The polypeptide is Trigger factor (Salmonella schwarzengrund (strain CVM19633)).